The chain runs to 164 residues: Crossover junction endodeoxyribonuclease RuvC (164 aa).

Catalysis depends on residues Asp7, Glu67, and Asp140. Asp7, Glu67, and Asp140 together coordinate Mg(2+).

The protein belongs to the RuvC family. In terms of assembly, homodimer which binds Holliday junction (HJ) DNA. The HJ becomes 2-fold symmetrical on binding to RuvC with unstacked arms; it has a different conformation from HJ DNA in complex with RuvA. In the full resolvosome a probable DNA-RuvA(4)-RuvB(12)-RuvC(2) complex forms which resolves the HJ. Mg(2+) is required as a cofactor.

The protein localises to the cytoplasm. The catalysed reaction is Endonucleolytic cleavage at a junction such as a reciprocal single-stranded crossover between two homologous DNA duplexes (Holliday junction).. The RuvA-RuvB-RuvC complex processes Holliday junction (HJ) DNA during genetic recombination and DNA repair. Endonuclease that resolves HJ intermediates. Cleaves cruciform DNA by making single-stranded nicks across the HJ at symmetrical positions within the homologous arms, yielding a 5'-phosphate and a 3'-hydroxyl group; requires a central core of homology in the junction. The consensus cleavage sequence is 5'-(A/T)TT(C/G)-3'. Cleavage occurs on the 3'-side of the TT dinucleotide at the point of strand exchange. HJ branch migration catalyzed by RuvA-RuvB allows RuvC to scan DNA until it finds its consensus sequence, where it cleaves and resolves the cruciform DNA. In Pelotomaculum thermopropionicum (strain DSM 13744 / JCM 10971 / SI), this protein is Crossover junction endodeoxyribonuclease RuvC.